A 79-amino-acid chain; its full sequence is Keratin-associated protein 21-1 (79 aa).

As to quaternary structure, interacts with hair keratins.

Functionally, in the hair cortex, hair keratin intermediate filaments are embedded in an interfilamentous matrix, consisting of hair keratin-associated proteins (KRTAP), which are essential for the formation of a rigid and resistant hair shaft through their extensive disulfide bond cross-linking with abundant cysteine residues of hair keratins. The matrix proteins include the high-sulfur and high-glycine-tyrosine keratins. In Homo sapiens (Human), this protein is Keratin-associated protein 21-1 (KRTAP21-1).